The chain runs to 160 residues: Transcription elongation factor GreA (160 aa).

Positions 12-76 form a coiled coil; the sequence is EGVKKLEEEL…QLENMLKNAS (65 aa).

The protein belongs to the GreA/GreB family.

Functionally, necessary for efficient RNA polymerase transcription elongation past template-encoded arresting sites. The arresting sites in DNA have the property of trapping a certain fraction of elongating RNA polymerases that pass through, resulting in locked ternary complexes. Cleavage of the nascent transcript by cleavage factors such as GreA or GreB allows the resumption of elongation from the new 3'terminus. GreA releases sequences of 2 to 3 nucleotides. This Clostridium botulinum (strain Hall / ATCC 3502 / NCTC 13319 / Type A) protein is Transcription elongation factor GreA.